The sequence spans 152 residues: UPF0178 protein Bcer98_3021 (152 aa).

It belongs to the UPF0178 family.

In Bacillus cytotoxicus (strain DSM 22905 / CIP 110041 / 391-98 / NVH 391-98), this protein is UPF0178 protein Bcer98_3021.